We begin with the raw amino-acid sequence, 186 residues long: MKKTLSIHSVRKDLILGSRRLSNYWWATIIFIGALGFLLAGLSSYFQVDLLPFTNSTDLVFIPQGIVMTFYGSIGVFLSLFLWLTIIWNIGAGYNEFNKDKGIVKIFRLGFPGKNRKICLQFNIKEIKSIKIDIKEGLNPRREIYLCTKDKRVIPLTRVGQPLLLSEVEEQAAEIARFLDVVLEGA.

The next 2 membrane-spanning stretches (helical) occupy residues 26–46 (WATI…SSYF) and 66–86 (IVMT…WLTI).

The protein belongs to the Ycf4 family.

It is found in the plastid. It localises to the chloroplast thylakoid membrane. Functionally, seems to be required for the assembly of the photosystem I complex. The chain is Photosystem I assembly protein Ycf4 from Pyropia yezoensis (Susabi-nori).